Reading from the N-terminus, the 544-residue chain is Methyl-accepting chemotaxis protein McpP (544 aa).

Helical transmembrane passes span 12-32 (RLWL…LLML), 50-70 (VVQT…AGTL), and 192-212 (DASL…MLIA). Positions 213–267 (RSIARPLQEAVQAMGNIASGESDLTRRLDTHGSDEITHLGEHFNRFNGKLQGVVG) constitute an HAMP domain. One can recognise a Methyl-accepting transducer domain in the interval 272–508 (AAHALAQSAG…EINRNVLDTA (237 aa)).

Belongs to the methyl-accepting chemotaxis (MCP) protein family.

The protein resides in the cell membrane. Its function is as follows. Chemotactic-signal transducers respond to changes in the concentration of attractants and repellents in the environment, transduce a signal from the outside to the inside of the cell, and facilitate sensory adaptation through the variation of the level of methylation. McpP is a chemoreceptor that responds specifically to some C2 and C3 carboxylic acids. Recognizes acetate, pyruvate, propionate, and L-lactate. The polypeptide is Methyl-accepting chemotaxis protein McpP (Pseudomonas putida (strain ATCC 47054 / DSM 6125 / CFBP 8728 / NCIMB 11950 / KT2440)).